The following is a 362-amino-acid chain: Peptide chain release factor 1 (362 aa).

At Q232 the chain carries N5-methylglutamine.

Belongs to the prokaryotic/mitochondrial release factor family. In terms of processing, methylated by PrmC. Methylation increases the termination efficiency of RF1.

It is found in the cytoplasm. Functionally, peptide chain release factor 1 directs the termination of translation in response to the peptide chain termination codons UAG and UAA. The sequence is that of Peptide chain release factor 1 from Myxococcus xanthus.